A 649-amino-acid chain; its full sequence is Glucan endo-1,3-beta-glucosidase btgC (649 aa).

Disordered regions lie at residues Met-1 to His-50 and Tyr-110 to Ala-224. Residues Met-1–Arg-274 are Cytoplasmic-facing. Positions Gly-144–Gly-157 are enriched in low complexity. Residues Asn-198 to Asp-208 show a composition bias toward acidic residues. The helical; Signal-anchor for type II membrane protein transmembrane segment at Gly-275–Val-295 threads the bilayer. The Extracellular segment spans residues Gly-296–Ala-649. Positions Asn-301 to Ser-329 are disordered. A compositionally biased stretch (acidic residues) spans Ser-314–Gly-323. N-linked (GlcNAc...) asparagine glycans are attached at residues Asn-369, Asn-392, and Asn-420. The active-site Proton donor is the Glu-452. Glu-551 functions as the Nucleophile in the catalytic mechanism. A glycan (N-linked (GlcNAc...) asparagine) is linked at Asn-596.

This sequence belongs to the glycosyl hydrolase 17 family.

The protein resides in the cell membrane. The catalysed reaction is Hydrolysis of (1-&gt;3)-beta-D-glucosidic linkages in (1-&gt;3)-beta-D-glucans.. Glucanases play a role in cell expansion during growth, in cell-cell fusion during mating, and in spore release during sporulation. This enzyme may be involved in beta-glucan degradation. Active on laminarin and lichenan. This Emericella nidulans (strain FGSC A4 / ATCC 38163 / CBS 112.46 / NRRL 194 / M139) (Aspergillus nidulans) protein is Glucan endo-1,3-beta-glucosidase btgC (btgC).